A 364-amino-acid polypeptide reads, in one-letter code: Histidinol-phosphate aminotransferase (364 aa).

Lysine 222 carries the post-translational modification N6-(pyridoxal phosphate)lysine.

This sequence belongs to the class-II pyridoxal-phosphate-dependent aminotransferase family. Histidinol-phosphate aminotransferase subfamily. Homodimer. Pyridoxal 5'-phosphate serves as cofactor.

The catalysed reaction is L-histidinol phosphate + 2-oxoglutarate = 3-(imidazol-4-yl)-2-oxopropyl phosphate + L-glutamate. It functions in the pathway amino-acid biosynthesis; L-histidine biosynthesis; L-histidine from 5-phospho-alpha-D-ribose 1-diphosphate: step 7/9. This Brevibacillus brevis (strain 47 / JCM 6285 / NBRC 100599) protein is Histidinol-phosphate aminotransferase.